A 1492-amino-acid polypeptide reads, in one-letter code: Condensin-2 complex subunit D3-L (1492 aa).

Residues 152–201 (WPRDPNASRKRKKDTLKSSQGDNRGGRKRPRPPRRDEQEMEDLSEEEQDE) are disordered. A compositionally biased stretch (acidic residues) spans 189–201 (QEMEDLSEEEQDE). HEAT repeat units follow at residues 543-581 (SSDGKEVLTMLRYRAGDEKTNVRKSALQVLVNVLKCHLI), 583-619 (CSSEDLSTLQDRCRDPAVSVRKQALTSLTELLLAQPH), and 621-659 (VLIQKAWLTGLIPVVLDTESSVQEKALECLDQLLLQSIT). Disordered stretches follow at residues 1269–1345 (QLER…PRPR), 1359–1406 (RKAA…SLVG), and 1454–1492 (IMSPDKPAPQPRKWNVESPVQRRSIRQRISGKAPLKPSN). The segment covering 1277–1290 (NVQNPPSAESTGSP) has biased composition (polar residues). Over residues 1377 to 1388 (PSTPSPARTTSS) the composition is skewed to low complexity.

As to quaternary structure, component of the condensin-2 complex, which contains the smc2 and smc4 heterodimer, and three non SMC subunits, ncapg2, ncaph2 and ncapd3 that probably regulate the complex.

Its subcellular location is the nucleus. In terms of biological role, regulatory subunit of the condensin-2 complex, a complex which establishes mitotic chromosome architecture and is involved in physical rigidity of the chromatid axis. The protein is Condensin-2 complex subunit D3-L of Xenopus laevis (African clawed frog).